A 624-amino-acid chain; its full sequence is (-)-beta-phellandrene synthase 4, chloroplastic (624 aa).

A chloroplast-targeting transit peptide spans 1–48; sequence MAIVSSVPLASKSCLHKSLISSIHKLKPFCRTIPTLGMSRPGKSVMPS. The tract at residues 41 to 60 is disordered; sequence PGKSVMPSMSMSSPVSDDGV. Positions 44 to 56 are enriched in low complexity; sequence SVMPSMSMSSPVS. Positions 375, 379, and 527 each coordinate Mg(2+). Positions 375–379 match the DDXXD motif motif; sequence DDMYD.

It belongs to the terpene synthase family. Tpsd subfamily. The cofactor is Mg(2+). It depends on Mn(2+) as a cofactor.

It is found in the plastid. It localises to the chloroplast. The catalysed reaction is (2E)-geranyl diphosphate = (-)-beta-phellandrene + diphosphate. It participates in terpene metabolism; oleoresin biosynthesis. Terpene synthase (TPS) involved in the biosynthesis of monoterpene natural products included in conifer oleoresin secretions and volatile emissions; these compounds contribute to biotic and abiotic stress defense against herbivores and pathogens. Catalyzes the conversion of (2E)-geranyl diphosphate (GPP) to (-)-beta-phellandrene. This is (-)-beta-phellandrene synthase 4, chloroplastic from Picea sitchensis (Sitka spruce).